A 150-amino-acid polypeptide reads, in one-letter code: Transcriptional repressor NrdR (150 aa).

A zinc finger lies at 3–34; sequence CPFCAFADSKVVDSRPDKGGSTIRRRRECESC. Positions 49–139 constitute an ATP-cone domain; that stretch reads PLVIKKDGRR…VYRSFKDITE (91 aa).

Belongs to the NrdR family. Zn(2+) is required as a cofactor.

Its function is as follows. Negatively regulates transcription of bacterial ribonucleotide reductase nrd genes and operons by binding to NrdR-boxes. The chain is Transcriptional repressor NrdR from Geotalea uraniireducens (strain Rf4) (Geobacter uraniireducens).